We begin with the raw amino-acid sequence, 252 residues long: Putative Kunitz-type serine protease inhibitor (252 aa).

The N-terminal stretch at 1–20 (MTREKSLALLITLAAALAAA) is a signal peptide. BPTI/Kunitz inhibitor domains are found at residues 27-77 (CHSP…FQTC) and 118-168 (CAAP…WSQC). Cystine bridges form between cysteine 27–cysteine 77, cysteine 36–cysteine 60, cysteine 52–cysteine 73, cysteine 118–cysteine 168, cysteine 127–cysteine 151, and cysteine 143–cysteine 164. N-linked (GlcNAc...) asparagine glycosylation is present at asparagine 46.

This sequence belongs to the venom Kunitz-type family. As to expression, expressed by the venom gland.

The protein localises to the secreted. In terms of biological role, serine protease inhibitor. The sequence is that of Putative Kunitz-type serine protease inhibitor from Austrelaps labialis (Pygmy copperhead).